The primary structure comprises 390 residues: Mevalonate kinase (390 aa).

ATP-binding positions include lysine 16, serine 130, and 135 to 141; that span reads GAGLGSS. Mg(2+) contacts are provided by serine 141 and glutamate 193. The active-site Proton acceptor is the aspartate 204.

This sequence belongs to the GHMP kinase family. Mevalonate kinase subfamily. The cofactor is Mg(2+).

Its subcellular location is the cytoplasm. It catalyses the reaction (R)-mevalonate + ATP = (R)-5-phosphomevalonate + ADP + H(+). It participates in isoprenoid biosynthesis; isopentenyl diphosphate biosynthesis via mevalonate pathway; isopentenyl diphosphate from (R)-mevalonate: step 1/3. Functionally, catalyzes the phosphorylation of mevalonate to mevalonate 5-phosphate, a key step in isoprenoid biosynthesis. In Dictyostelium discoideum (Social amoeba), this protein is Mevalonate kinase.